A 266-amino-acid polypeptide reads, in one-letter code: Transcription regulator FGM4 (266 aa).

Positions lysine 17 to glycine 36 are disordered. Positions threonine 18 to alanine 31 are enriched in basic residues. 2 ANK repeats span residues lysine 183–glutamate 212 and alanine 216–tyrosine 245.

Its subcellular location is the nucleus. In terms of biological role, transcription regulator; part of the Fg3_54/C64 gene cluster that mediates the biosynthesis of the octapeptide fusaoctaxin A, a virulence factor that is required for cell-to-cell invasiveness of plant host. Positively regulates the expression the Fg3_54/C64 gene cluster. The chain is Transcription regulator FGM4 from Gibberella zeae (strain ATCC MYA-4620 / CBS 123657 / FGSC 9075 / NRRL 31084 / PH-1) (Wheat head blight fungus).